The sequence spans 286 residues: Aldo-keto reductase MAP_4149 (286 aa).

Tyr61 functions as the Proton donor in the catalytic mechanism. NADPH contacts are provided by Leu201, Val203, Val239, Arg241, Ser242, Arg247, and Asn251.

The protein belongs to the aldo/keto reductase family.

This chain is Aldo-keto reductase MAP_4149, found in Mycolicibacterium paratuberculosis (strain ATCC BAA-968 / K-10) (Mycobacterium paratuberculosis).